The sequence spans 351 residues: Phospho-N-acetylmuramoyl-pentapeptide-transferase (351 aa).

10 consecutive transmembrane segments (helical) span residues 17-37, 61-83, 88-105, 130-150, 158-178, 190-210, 230-250, 254-274, 279-299, and 328-348; these read TAYATIFAFLLALIFGPFIIS, MGIPTMGGVLIFFCVLVSLFFWI, IYFLIVLFVMVSFACLGF, ILFSFISVVMLYYFGGEHVSI, SLKLDLGILYIPFGMFVLISA, GLAIGLSIVVIGALIIIAYLT, LVIFLGALLGGSFGFLWFNAY, IMMGDTGSLSIGAVLGMVALI, ILFAILAGVFVVETLSVIIQV, and QVVIRFWIIGLIFAILALSTI.

It belongs to the glycosyltransferase 4 family. MraY subfamily. Mg(2+) is required as a cofactor.

Its subcellular location is the cell inner membrane. It carries out the reaction UDP-N-acetyl-alpha-D-muramoyl-L-alanyl-gamma-D-glutamyl-meso-2,6-diaminopimeloyl-D-alanyl-D-alanine + di-trans,octa-cis-undecaprenyl phosphate = di-trans,octa-cis-undecaprenyl diphospho-N-acetyl-alpha-D-muramoyl-L-alanyl-D-glutamyl-meso-2,6-diaminopimeloyl-D-alanyl-D-alanine + UMP. Its pathway is cell wall biogenesis; peptidoglycan biosynthesis. In terms of biological role, catalyzes the initial step of the lipid cycle reactions in the biosynthesis of the cell wall peptidoglycan: transfers peptidoglycan precursor phospho-MurNAc-pentapeptide from UDP-MurNAc-pentapeptide onto the lipid carrier undecaprenyl phosphate, yielding undecaprenyl-pyrophosphoryl-MurNAc-pentapeptide, known as lipid I. The polypeptide is Phospho-N-acetylmuramoyl-pentapeptide-transferase (Borrelia duttonii (strain Ly)).